The chain runs to 588 residues: MSSLYIKTPLHALSAGPDSHANSSYYDNLLLPSFSNLSSNISRNNITTDNNINSASPRKYSFHSLNVSPILSPISLANEILGKKSNTAPASPHHMDYNPISSLTPGNSPEFNKASLSQISFTNPLNYGSGLGFSSNSQPRLPLLDRLSSVSLSKRPERPQQSLPSLRHLQLLPSPLLQENAARFPDTSKRTSNWKTDLTHWCKDTNYQDYVKIREEVAHFKPLSIPNLTNNQNNDSFNYGKELESTRSSKFHSPSKESFDRTKLIPSILEAKDQFKDLSNNAWSITPPVTPPMSPPTNRTMERTTLRGVEASFFEGKSSNNDSIFNPIISEKLVQEVKHQRQLRGNSFPMPNASHKKTNSFKALQIKKLLANRDILSNNSKSNVRKPSKNKISKQASNVFGNTARQLVMKLDNASYSSVSASSSPSPSTPTKSGKMRSRSSSPVRPKAYTPSPRSPNYHRFALDSPPQSPRRSSNSSITKKGSRRSSGSSPTRHTTRVCVSCHSSDSPCWRPSWSPRKQDQLCNSCGLRYKKTHTRCLNDLCRKIPTKGEINIMKSNGIDKEFVPERNCEIEGYRCLFCNYITETVEN.

Phosphoserine is present on Ser56. Disordered stretches follow at residues 85–109 (SNTA…GNSP), 377–398 (SNNS…QASN), and 417–495 (SSVS…TRHT). A compositionally biased stretch (polar residues) spans 99-109 (PISSLTPGNSP). Basic residues predominate over residues 383–392 (NVRKPSKNKI). The span at 417–433 (SSVSASSSPSPSTPTKS) shows a compositional bias: low complexity. Ser465 bears the Phosphoserine mark. Low complexity predominate over residues 470 to 493 (PRRSSNSSITKKGSRRSSGSSPTR). The segment at 499–526 (CVSCHSSDSPCWRPSWSPRKQDQLCNSC) adopts a GATA-type; atypical zinc-finger fold.

In terms of assembly, component of the RPD3C(L) complex composed of at least ASH1, CTI6, DEP1, PHO23, RPD3, RXT2, RXT3, SAP30, SDS3, SIN3, UME1 and UME6.

It is found in the nucleus. Functionally, component of the RPD3C(L) histone deacetylase complex (HDAC). Responsible for the deacetylation of lysine residues on the N-terminal part of the core histones (H2A, H2B, H3 and H4). Histone deacetylation gives a tag for epigenetic repression and plays an important role in transcriptional regulation, cell cycle progression and developmental events. ASH1 is necessary to repress HO in daughter cells to block mating-type switching through its binding to HO promoter 5'-YTGAT-3' sites. Also involved in pseudohyphal growth. This chain is Transcriptional regulatory protein ASH1 (ASH1), found in Saccharomyces cerevisiae (strain ATCC 204508 / S288c) (Baker's yeast).